Here is a 260-residue protein sequence, read N- to C-terminus: Small ribosomal subunit protein uS2 (260 aa).

This sequence belongs to the universal ribosomal protein uS2 family.

This chain is Small ribosomal subunit protein uS2 (rpsB), found in Borreliella burgdorferi (strain ATCC 35210 / DSM 4680 / CIP 102532 / B31) (Borrelia burgdorferi).